The following is a 254-amino-acid chain: NADPH-dependent ferric-chelate reductase (254 aa).

The FAD-binding FR-type domain maps to 15 to 136; the sequence is LRFRELTVLR…AGPRGSLVVP (122 aa).

Belongs to the SIP oxidoreductase family.

Its subcellular location is the cytoplasm. The enzyme catalyses 2 a Fe(II)-siderophore + NADP(+) + H(+) = 2 a Fe(III)-siderophore + NADPH. Plays a role in iron homeostasis under excess nickel conditions. This Escherichia coli (strain K12) protein is NADPH-dependent ferric-chelate reductase (yqjH).